Here is a 306-residue protein sequence, read N- to C-terminus: Non-specific ribonucleoside hydrolase RihC (306 aa).

His-235 is a catalytic residue.

The protein belongs to the IUNH family. RihC subfamily.

In terms of biological role, hydrolyzes both purine and pyrimidine ribonucleosides with a broad-substrate specificity. This is Non-specific ribonucleoside hydrolase RihC from Salmonella enteritidis PT4 (strain P125109).